Reading from the N-terminus, the 170-residue chain is MORN repeat-containing protein 5 (170 aa).

MORN repeat units follow at residues 8 to 30 (YFGE…TDTR), 31 to 53 (YIGE…SGSR), and 54 to 75 (FDAI…DGLQ).

In terms of tissue distribution, only detected in testis (at protein level).

The protein localises to the cell projection. It is found in the cilium. Its subcellular location is the flagellum. This chain is MORN repeat-containing protein 5 (Morn5), found in Mus musculus (Mouse).